A 333-amino-acid chain; its full sequence is NADH-quinone oxidoreductase subunit H (333 aa).

Helical transmembrane passes span 15-35 (FFIF…FVTY), 88-108 (FILA…VIPF), 117-137 (IGVG…GVVT), 159-179 (ISYE…AGSL), 191-211 (VWYI…AVAE), 239-259 (WAFF…LITV), 274-296 (IPGA…WFRV), and 313-333 (VLLP…ELFF).

The protein belongs to the complex I subunit 1 family. NDH-1 is composed of 14 different subunits. Subunits NuoA, H, J, K, L, M, N constitute the membrane sector of the complex.

Its subcellular location is the cell membrane. It carries out the reaction a quinone + NADH + 5 H(+)(in) = a quinol + NAD(+) + 4 H(+)(out). In terms of biological role, NDH-1 shuttles electrons from NADH, via FMN and iron-sulfur (Fe-S) centers, to quinones in the respiratory chain. The immediate electron acceptor for the enzyme in this species is believed to be ubiquinone. Couples the redox reaction to proton translocation (for every two electrons transferred, four hydrogen ions are translocated across the cytoplasmic membrane), and thus conserves the redox energy in a proton gradient. This subunit may bind ubiquinone. This Bacillus thuringiensis subsp. konkukian (strain 97-27) protein is NADH-quinone oxidoreductase subunit H.